The following is an 894-amino-acid chain: Protein translocase subunit SecA (894 aa).

ATP-binding positions include glutamine 87, 105-109 (GEGKT), and aspartate 512. The interval 857-894 (FNLGDEPEAQQPVTSKKVGRNEPCPCGSGKKYKQCCGK) is disordered. Zn(2+)-binding residues include cysteine 880, cysteine 882, cysteine 891, and cysteine 892.

The protein belongs to the SecA family. Monomer and homodimer. Part of the essential Sec protein translocation apparatus which comprises SecA, SecYEG and auxiliary proteins SecDF-YajC and YidC. Requires Zn(2+) as cofactor.

The protein localises to the cell inner membrane. It is found in the cytoplasm. The enzyme catalyses ATP + H2O + cellular proteinSide 1 = ADP + phosphate + cellular proteinSide 2.. In terms of biological role, part of the Sec protein translocase complex. Interacts with the SecYEG preprotein conducting channel. Has a central role in coupling the hydrolysis of ATP to the transfer of proteins into and across the cell membrane, serving as an ATP-driven molecular motor driving the stepwise translocation of polypeptide chains across the membrane. This is Protein translocase subunit SecA from Geotalea uraniireducens (strain Rf4) (Geobacter uraniireducens).